We begin with the raw amino-acid sequence, 277 residues long: 4-hydroxy-tetrahydrodipicolinate reductase (277 aa).

NAD(+) is bound at residue 9 to 14 (GATGRM). Lysine 37 serves as a coordination point for NADP(+). 75–77 (GTS) is a binding site for NAD(+). Histidine 132 (proton donor/acceptor) is an active-site residue. The active-site Proton donor is the lysine 136. A (S)-2,3,4,5-tetrahydrodipicolinate-binding site is contributed by 142 to 143 (GT). 2 disordered regions span residues 154 to 173 (ARGARGPVQAPHTDQRARGQ) and 247 to 277 (ERAAQAAAGDAPSGPVDDGGPSGQAATVTSA). Over residues 250–265 (AQAAAGDAPSGPVDDG) the composition is skewed to low complexity.

The protein belongs to the DapB family.

Its subcellular location is the cytoplasm. The enzyme catalyses (S)-2,3,4,5-tetrahydrodipicolinate + NAD(+) + H2O = (2S,4S)-4-hydroxy-2,3,4,5-tetrahydrodipicolinate + NADH + H(+). It catalyses the reaction (S)-2,3,4,5-tetrahydrodipicolinate + NADP(+) + H2O = (2S,4S)-4-hydroxy-2,3,4,5-tetrahydrodipicolinate + NADPH + H(+). The protein operates within amino-acid biosynthesis; L-lysine biosynthesis via DAP pathway; (S)-tetrahydrodipicolinate from L-aspartate: step 4/4. Functionally, catalyzes the conversion of 4-hydroxy-tetrahydrodipicolinate (HTPA) to tetrahydrodipicolinate. This chain is 4-hydroxy-tetrahydrodipicolinate reductase, found in Clavibacter michiganensis subsp. michiganensis (strain NCPPB 382).